Here is a 63-residue protein sequence, read N- to C-terminus: MKLGAFLLLVSLITLSLEVQELQAAVRPLQLLGTCAELCRGDWDCGPEEQCVSIGCSHICTTN.

The first 24 residues, 1 to 24, serve as a signal peptide directing secretion; that stretch reads MKLGAFLLLVSLITLSLEVQELQA. The 39-residue stretch at 25 to 63 folds into the WAP; atypical domain; sequence AVRPLQLLGTCAELCRGDWDCGPEEQCVSIGCSHICTTN. Disulfide bonds link Cys-35–Cys-56, Cys-39–Cys-51, and Cys-45–Cys-60.

Predominantly expressed in white adipose tissue and liver.

Its subcellular location is the secreted. In terms of biological role, may promote activation of the metalloproteinase MMP2. The sequence is that of Protein Wfdc21 from Mus musculus (Mouse).